The sequence spans 193 residues: Peptidyl-tRNA hydrolase (193 aa).

Tyr-16 is a binding site for tRNA. Residue His-21 is the Proton acceptor of the active site. The tRNA site is built by Phe-66, Asn-68, and Asn-114.

Belongs to the PTH family. As to quaternary structure, monomer.

The protein localises to the cytoplasm. The catalysed reaction is an N-acyl-L-alpha-aminoacyl-tRNA + H2O = an N-acyl-L-amino acid + a tRNA + H(+). Its function is as follows. Hydrolyzes ribosome-free peptidyl-tRNAs (with 1 or more amino acids incorporated), which drop off the ribosome during protein synthesis, or as a result of ribosome stalling. Functionally, catalyzes the release of premature peptidyl moieties from peptidyl-tRNA molecules trapped in stalled 50S ribosomal subunits, and thus maintains levels of free tRNAs and 50S ribosomes. In Pelobacter propionicus (strain DSM 2379 / NBRC 103807 / OttBd1), this protein is Peptidyl-tRNA hydrolase.